We begin with the raw amino-acid sequence, 337 residues long: Undecaprenyl-phosphate 4-deoxy-4-formamido-L-arabinose transferase (337 aa).

Helical transmembrane passes span 235–255 (LSII…LLIV) and 270–290 (FVLF…MGLL).

It belongs to the glycosyltransferase 2 family.

It localises to the cell inner membrane. The catalysed reaction is UDP-4-deoxy-4-formamido-beta-L-arabinose + di-trans,octa-cis-undecaprenyl phosphate = 4-deoxy-4-formamido-alpha-L-arabinopyranosyl di-trans,octa-cis-undecaprenyl phosphate + UDP. Its pathway is glycolipid biosynthesis; 4-amino-4-deoxy-alpha-L-arabinose undecaprenyl phosphate biosynthesis; 4-amino-4-deoxy-alpha-L-arabinose undecaprenyl phosphate from UDP-4-deoxy-4-formamido-beta-L-arabinose and undecaprenyl phosphate: step 1/2. It functions in the pathway bacterial outer membrane biogenesis; lipopolysaccharide biosynthesis. Functionally, catalyzes the transfer of 4-deoxy-4-formamido-L-arabinose from UDP to undecaprenyl phosphate. The modified arabinose is attached to lipid A and is required for resistance to polymyxin and cationic antimicrobial peptides. This Pseudomonas syringae pv. syringae (strain B728a) protein is Undecaprenyl-phosphate 4-deoxy-4-formamido-L-arabinose transferase.